The chain runs to 547 residues: Chaperonin GroEL (547 aa).

Residues 30–33 (TLGP), Lys51, 87–91 (DGTTT), Gly415, and Asp496 contribute to the ATP site.

This sequence belongs to the chaperonin (HSP60) family. In terms of assembly, forms a cylinder of 14 subunits composed of two heptameric rings stacked back-to-back. Interacts with the co-chaperonin GroES.

The protein localises to the cytoplasm. The enzyme catalyses ATP + H2O + a folded polypeptide = ADP + phosphate + an unfolded polypeptide.. Its function is as follows. Together with its co-chaperonin GroES, plays an essential role in assisting protein folding. The GroEL-GroES system forms a nano-cage that allows encapsulation of the non-native substrate proteins and provides a physical environment optimized to promote and accelerate protein folding. The polypeptide is Chaperonin GroEL (Actinobacillus pleuropneumoniae serotype 7 (strain AP76)).